The following is a 1220-amino-acid chain: Plasma membrane calcium-transporting ATPase 1 (1220 aa).

Gly2 carries the post-translational modification N-acetylglycine. The Cytoplasmic segment spans residues 2–105 (GDMANNSVAY…KTFLQLVWEA (104 aa)). Ser8 and Ser17 each carry phosphoserine. The helical transmembrane segment at 106–126 (LQDVTLIILEIAAIVSLGLSF) threads the bilayer. At 127-154 (YQPPEGDNALCGEVSVGEEEGEGETGWI) the chain is on the extracellular side. Residues 155 to 175 (EGAAILLSVVCVVLVTAFNDW) form a helical membrane-spanning segment. Residues 176 to 366 (SKEKQFRGLQ…KEKSVLQGKL (191 aa)) lie on the Cytoplasmic side of the membrane. The interval 297 to 356 (EEEKKDEKKKEKKNKKQDGAIENRNKAKAQDGAAMEMQPLKSEEGGDGDEKDKKKANLPK) is disordered. 2 stretches are compositionally biased toward basic and acidic residues: residues 312–325 (KQDGAIENRNKAKA) and 337–356 (KSEEGGDGDEKDKKKANLPK). Phosphoserine is present on Ser338. Residues 367–386 (TKLAVQIGKAGLLMSAITVI) form a helical membrane-spanning segment. The Extracellular portion of the chain corresponds to 387–418 (ILVLYFVIDTFWVQKRPWLAECTPIYIQYFVK). Residues 419–439 (FFIIGVTVLVVAVPEGLPLAV) traverse the membrane as a helical segment. Topologically, residues 440 to 855 (TISLAYSVKK…RNVYDSISKF (416 aa)) are cytoplasmic. Asp475 (4-aspartylphosphate intermediate) is an active-site residue. Positions 475, 477, 797, and 801 each coordinate Mg(2+). A helical transmembrane segment spans residues 856-876 (LQFQLTVNVVAVIVAFTGACI). Over 877–882 (TQDSPL) the chain is Extracellular. A helical membrane pass occupies residues 883-903 (KAVQMLWVNLIMDTLASLALA). Over 904–927 (TEPPTESLLLRKPYGRNKPLISRT) the chain is Cytoplasmic. A helical membrane pass occupies residues 928–948 (MMKNILGHAFYQLVVVFTLLF). Residues 949 to 971 (AGEKFFDIDSGRNAPLHAPPSEH) are Extracellular-facing. Residues 972–991 (YTIVFNTFVLMQLFNEINAR) traverse the membrane as a helical segment. At 992–1005 (KIHGERNVFEGIFN) the chain is on the cytoplasmic side. Residues 1006–1027 (NAIFCTIVLGTFVVQIIIVQFG) traverse the membrane as a helical segment. The Extracellular segment spans residues 1028 to 1039 (GKPFSCSELSIE). The helical transmembrane segment at 1040–1060 (QWLWSIFLGMGTLLWGQLIST) threads the bilayer. The Cytoplasmic segment spans residues 1061–1220 (IPTSRLKFLK…SPLHSLETSL (160 aa)). The tract at residues 1100 to 1117 (LRRGQILWFRGLNRIQTQ) is calmodulin-binding subdomain A. Thr1116 is subject to Phosphothreonine; by PKC. The segment at 1118–1127 (IRVVNAFRSS) is calmodulin-binding subdomain B. The tract at residues 1118–1220 (IRVVNAFRSS…SPLHSLETSL (103 aa)) is required for basolateral membrane targeting. 2 positions are modified to phosphoserine: Ser1140 and Ser1155. A disordered region spans residues 1160 to 1220 (PLIDDTDAED…SPLHSLETSL (61 aa)). Thr1165 is subject to Phosphothreonine. A phosphoserine mark is found at Ser1178 and Ser1182. The span at 1200-1220 (MNKSATSSSPGSPLHSLETSL) shows a compositional bias: polar residues.

Belongs to the cation transport ATPase (P-type) (TC 3.A.3) family. Type IIB subfamily. As to quaternary structure, monomer. Dimer. Oligomer. Calmodulin binding. Interacts with PDZD11. Interacts with SLC35G1 and STIM1. Interacts with YWHAE; interacts with the monomeric and dimeric forms of the YWHAE but prefer the monomer form; this interaction inhibits calcium-transporting ATPase activity. Interacts with NPTN; this interaction stabilizes ATP2B1 and increases ATPase activity; this interaction controls T cell calcium homeostasis following T cell activation. Interacts with EPB41; regulates small intestinal calcium absorption through regulation of membrane expression of ATP2B1.

The protein resides in the cell membrane. Its subcellular location is the basolateral cell membrane. The protein localises to the synapse. It is found in the presynaptic cell membrane. It localises to the cytoplasmic vesicle. The protein resides in the secretory vesicle. Its subcellular location is the synaptic vesicle membrane. The enzyme catalyses Ca(2+)(in) + ATP + H2O = Ca(2+)(out) + ADP + phosphate + H(+). Functionally, catalyzes the hydrolysis of ATP coupled with the transport of calcium from the cytoplasm to the extracellular space thereby maintaining intracellular calcium homeostasis. Plays a role in blood pressure regulation through regulation of intracellular calcium concentration and nitric oxide production leading to regulation of vascular smooth muscle cells vasoconstriction. Positively regulates bone mineralization through absorption of calcium from the intestine. Plays dual roles in osteoclast differentiation and survival by regulating RANKL-induced calcium oscillations in preosteoclasts and mediating calcium extrusion in mature osteoclasts. Regulates insulin sensitivity through calcium/calmodulin signaling pathway by regulating AKT1 activation and NOS3 activation in endothelial cells. May play a role in synaptic transmission by modulating calcium and proton dynamics at the synaptic vesicles. The polypeptide is Plasma membrane calcium-transporting ATPase 1 (Sus scrofa (Pig)).